Here is a 377-residue protein sequence, read N- to C-terminus: Homoserine O-acetyltransferase (377 aa).

An AB hydrolase-1 domain is found at 48–347; it reads NVVLIEHALT…PVGHDAFLTE (300 aa). The active-site Nucleophile is Ser143. Arg213 provides a ligand contact to substrate. Catalysis depends on residues Asp311 and His341. Asp342 contacts substrate.

The protein belongs to the AB hydrolase superfamily. MetX family. In terms of assembly, homodimer.

Its subcellular location is the cytoplasm. The catalysed reaction is L-homoserine + acetyl-CoA = O-acetyl-L-homoserine + CoA. It functions in the pathway amino-acid biosynthesis; L-methionine biosynthesis via de novo pathway; O-acetyl-L-homoserine from L-homoserine: step 1/1. Functionally, transfers an acetyl group from acetyl-CoA to L-homoserine, forming acetyl-L-homoserine. This is Homoserine O-acetyltransferase from Corynebacterium efficiens (strain DSM 44549 / YS-314 / AJ 12310 / JCM 11189 / NBRC 100395).